The chain runs to 83 residues: Cytochrome b559 subunit alpha (83 aa).

Residues 21–35 form a helical membrane-spanning segment; sequence VIHSITIPSLFIAGW. Position 23 (His23) interacts with heme.

Belongs to the PsbE/PsbF family. Heterodimer of an alpha subunit and a beta subunit. PSII is composed of 1 copy each of membrane proteins PsbA, PsbB, PsbC, PsbD, PsbE, PsbF, PsbH, PsbI, PsbJ, PsbK, PsbL, PsbM, PsbT, PsbX, PsbY, PsbZ, Psb30/Ycf12, at least 3 peripheral proteins of the oxygen-evolving complex and a large number of cofactors. It forms dimeric complexes. Heme b serves as cofactor.

It localises to the plastid. Its subcellular location is the chloroplast thylakoid membrane. Its function is as follows. This b-type cytochrome is tightly associated with the reaction center of photosystem II (PSII). PSII is a light-driven water:plastoquinone oxidoreductase that uses light energy to abstract electrons from H(2)O, generating O(2) and a proton gradient subsequently used for ATP formation. It consists of a core antenna complex that captures photons, and an electron transfer chain that converts photonic excitation into a charge separation. The protein is Cytochrome b559 subunit alpha of Helianthus annuus (Common sunflower).